A 612-amino-acid chain; its full sequence is Proton pump-interactor 1 (612 aa).

Residues 1 to 58 (MGVEVVNSGGFEVAPAPFEGKPEKNGKLDQGKGDDAPINFGSVGELPKNAEENNNKVV) form a disordered region. A compositionally biased stretch (basic and acidic residues) spans 20–35 (GKPEKNGKLDQGKGDD). 2 coiled-coil regions span residues 90 to 113 (PKIK…RTGV) and 251 to 314 (LDGV…NSEY). 4 stretches are compositionally biased toward basic and acidic residues: residues 374–387 (LSRD…DEKP), 434–446 (EKAK…KNVA), 459–498 (PQKE…EKAA), and 505–519 (AQKE…EQEK). Positions 374 to 572 (LSRDGRMRNP…PIRNRTRGRG (199 aa)) are disordered. Positions 466–526 (VDAATAKEMR…QEKKAKKKTG (61 aa)) form a coiled coil. Residues 531–545 (TETEEVPEASEEEIE) are compositionally biased toward acidic residues. Ser-540 is subject to Phosphoserine. Positions 549-564 (QEEKPQKEKVFKEKPI) are enriched in basic and acidic residues. The chain crosses the membrane as a helical span at residues 591-611 (VYAAPAALVVLLLLVLGYYYV).

It belongs to the plant Proton pump-interactor protein family. As to quaternary structure, interacts with AHA1 via N-terminal region. In terms of tissue distribution, strongly expressed in root and shoot vascular systems, particularly in meristematic and sink tissues. Also present in pollen, stigmas and siliques, but not in developing embryos.

It is found in the cell membrane. Its subcellular location is the endoplasmic reticulum membrane. Its function is as follows. Promotes AHA1 plasma membrane ATPase activity by binding to a site different from the 14-3-3 binding site. The sequence is that of Proton pump-interactor 1 (PPI1) from Arabidopsis thaliana (Mouse-ear cress).